Here is a 512-residue protein sequence, read N- to C-terminus: 2-isopropylmalate synthase (512 aa).

The Pyruvate carboxyltransferase domain maps to 5-268; sequence LIIFDTTLRD…ELGIDTQHIV (264 aa). Positions 14, 202, 204, and 239 each coordinate Mn(2+). Residues 394-512 form a regulatory domain region; the sequence is GFVSLSQRSE…SKAERVAAQG (119 aa).

This sequence belongs to the alpha-IPM synthase/homocitrate synthase family. LeuA type 1 subfamily. As to quaternary structure, homodimer. The cofactor is Mn(2+).

The protein resides in the cytoplasm. It carries out the reaction 3-methyl-2-oxobutanoate + acetyl-CoA + H2O = (2S)-2-isopropylmalate + CoA + H(+). It functions in the pathway amino-acid biosynthesis; L-leucine biosynthesis; L-leucine from 3-methyl-2-oxobutanoate: step 1/4. Catalyzes the condensation of the acetyl group of acetyl-CoA with 3-methyl-2-oxobutanoate (2-ketoisovalerate) to form 3-carboxy-3-hydroxy-4-methylpentanoate (2-isopropylmalate). The protein is 2-isopropylmalate synthase of Paracidovorax citrulli (strain AAC00-1) (Acidovorax citrulli).